The following is a 754-amino-acid chain: tRNA 5-methylaminomethyl-2-thiouridine biosynthesis bifunctional protein MnmC (754 aa).

The segment at Met-1–Ser-320 is tRNA (mnm(5)s(2)U34)-methyltransferase. Residues Ile-324–Cys-754 are FAD-dependent cmnm(5)s(2)U34 oxidoreductase.

It in the N-terminal section; belongs to the methyltransferase superfamily. tRNA (mnm(5)s(2)U34)-methyltransferase family. In the C-terminal section; belongs to the DAO family. It depends on FAD as a cofactor.

The protein resides in the cytoplasm. It carries out the reaction 5-aminomethyl-2-thiouridine(34) in tRNA + S-adenosyl-L-methionine = 5-methylaminomethyl-2-thiouridine(34) in tRNA + S-adenosyl-L-homocysteine + H(+). In terms of biological role, catalyzes the last two steps in the biosynthesis of 5-methylaminomethyl-2-thiouridine (mnm(5)s(2)U) at the wobble position (U34) in tRNA. Catalyzes the FAD-dependent demodification of cmnm(5)s(2)U34 to nm(5)s(2)U34, followed by the transfer of a methyl group from S-adenosyl-L-methionine to nm(5)s(2)U34, to form mnm(5)s(2)U34. The chain is tRNA 5-methylaminomethyl-2-thiouridine biosynthesis bifunctional protein MnmC from Shewanella denitrificans (strain OS217 / ATCC BAA-1090 / DSM 15013).